A 293-amino-acid polypeptide reads, in one-letter code: Sodium-type flagellar protein MotY (293 aa).

The first 21 residues, 1-21 (MNKWLITSGVMLSLLSANSYA), serve as a signal peptide directing secretion. In terms of domain architecture, OmpA-like spans 175-292 (YSFEDIAFTI…RVVISLGRTQ (118 aa)).

Its subcellular location is the cell membrane. Functionally, may play the role of a stator in the sodium flagellar motor, stabilizing the force-generating unit through direct interaction with the cell wall. The polypeptide is Sodium-type flagellar protein MotY (Vibrio parahaemolyticus serotype O3:K6 (strain RIMD 2210633)).